A 233-amino-acid chain; its full sequence is H-2 class II histocompatibility antigen, A-S alpha chain (233 aa).

An alpha-1 region spans residues Glu1 to Asn88. Residues Glu1 to Glu195 lie on the Extracellular side of the membrane. The segment at Glu89 to Trp182 is alpha-2. An Ig-like C1-type domain is found at Pro91 to Glu183. Residues Cys111 and Cys167 are joined by a disulfide bond. An N-linked (GlcNAc...) asparagine glycan is attached at Asn122. The connecting peptide stretch occupies residues Glu183 to Glu195. Residues Thr196 to Leu221 form a helical membrane-spanning segment. At Arg222–Leu233 the chain is on the cytoplasmic side.

It belongs to the MHC class II family.

Its subcellular location is the membrane. This is H-2 class II histocompatibility antigen, A-S alpha chain (H2-Aa) from Mus musculus (Mouse).